A 365-amino-acid polypeptide reads, in one-letter code: Chorismate synthase (365 aa).

Positions 48 and 54 each coordinate NADP(+). FMN contacts are provided by residues 131 to 133 (RSS), 243 to 244 (NA), Gly288, 303 to 307 (KPTSS), and Arg329.

Belongs to the chorismate synthase family. Homotetramer. FMNH2 serves as cofactor.

It carries out the reaction 5-O-(1-carboxyvinyl)-3-phosphoshikimate = chorismate + phosphate. It functions in the pathway metabolic intermediate biosynthesis; chorismate biosynthesis; chorismate from D-erythrose 4-phosphate and phosphoenolpyruvate: step 7/7. Its function is as follows. Catalyzes the anti-1,4-elimination of the C-3 phosphate and the C-6 proR hydrogen from 5-enolpyruvylshikimate-3-phosphate (EPSP) to yield chorismate, which is the branch point compound that serves as the starting substrate for the three terminal pathways of aromatic amino acid biosynthesis. This reaction introduces a second double bond into the aromatic ring system. In Rhizobium leguminosarum bv. trifolii (strain WSM2304), this protein is Chorismate synthase.